The chain runs to 309 residues: Serine/threonine-protein phosphatase 2A catalytic subunit alpha isoform (309 aa).

Mn(2+)-binding residues include Asp-57, His-59, Asp-85, and Asn-117. 3 residues coordinate Zn(2+): Asp-57, His-59, and Asp-85. 2 residues coordinate Fe(3+): Asp-85 and Asn-117. His-118 serves as the catalytic Proton donor. Residues His-167 and His-241 each contribute to the Mn(2+) site. Residues His-167 and His-241 each contribute to the Fe(3+) site. At Tyr-307 the chain carries Phosphotyrosine. Position 309 is a leucine methyl ester (Leu-309).

The protein belongs to the PPP phosphatase family. PP-1 subfamily. As to quaternary structure, PP2A consists of a common heterodimeric core enzyme composed of PPP2CA, a 36 kDa catalytic subunit (subunit C), and PPP2R1A, a 65 kDa constant regulatory subunit (PR65 or subunit A), that associates with a variety of regulatory subunits. Proteins that associate with the core dimer include three families of regulatory subunits B (the R2/B/PR55/B55, R3/B''/PR72/PR130/PR59 and R5/B'/B56 families), the 48 kDa variable regulatory subunit, viral proteins, and cell signaling molecules. Interacts with the PP2A A subunit PPP2R1A. Interacts with the regulatory subunit PPP2R2A. Interacts (via C-terminus) with PTPA. Interacts with NXN; the interaction is direct. Interacts with KCTD20. Interacts with BTBD10. Interacts with SGO1 and SGO2. Interacts with RAF1. Interaction with IGBP1 protects unassembled PPP2CA from degradative ubiquitination. Interacts with GSK3B (via C2 domain). Interacts with MFHAS1; retains PPP2CA into the cytoplasm and excludes it from the nucleus. Interacts with PABIR1/FAM122A. Interacts with ADCY8; interaction is phosphatase activity-dependent; antagonizes interaction between ADCY8 and calmodulin. Interacts with CRTC3 (when phosphorylated at 'Ser-391'). Interacts with SPRY2; the interaction is inhibited by TESK1 interaction with SPRY2, possibly by vesicular sequestration of SPRY2. Interacts with TRAF3IP3. Interacts with AMBRA1 (via PxP motifs); enhancing interaction between PPP2CA and MYC or FOXO3. Forms a complex with AMBRA1 and BECN1; AMBRA1 and BECN1 components of the complex regulate MYC stability via different pathways. Part of the core of STRIPAK complexes composed of PP2A catalytic and scaffolding subunits, the striatins (PP2A regulatory subunits), the striatin-associated proteins MOB4, STRIP1 and STRIP2, PDCD10 and members of the STE20 kinases, such as STK24 and STK26. Phosphatase component of the Integrator-PP2A (INTAC) complex, composed of the Integrator core complex and protein phosphatase 2A subunits PPP2CA and PPP2R1A. Mn(2+) is required as a cofactor. It depends on Fe(3+) as a cofactor. Zn(2+) serves as cofactor. In terms of processing, reversibly methyl esterified on Leu-309 by leucine carboxyl methyltransferase 1 (LCMT1) and protein phosphatase methylesterase 1 (PPME1). Carboxyl methylation influences the affinity of the catalytic subunit for the different regulatory subunits, thereby modulating the PP2A holoenzyme's substrate specificity, enzyme activity and cellular localization. Phosphorylation of either threonine (by autophosphorylation-activated protein kinase) or tyrosine results in inactivation of the phosphatase. Auto-dephosphorylation has been suggested as a mechanism for reactivation. Post-translationally, polyubiquitinated, leading to its degradation by the proteasome.

The protein localises to the cytoplasm. Its subcellular location is the nucleus. The protein resides in the chromosome. It is found in the centromere. It localises to the cytoskeleton. The protein localises to the spindle pole. The enzyme catalyses O-phospho-L-seryl-[protein] + H2O = L-seryl-[protein] + phosphate. It carries out the reaction O-phospho-L-threonyl-[protein] + H2O = L-threonyl-[protein] + phosphate. Its activity is regulated as follows. Inhibited by the interaction between PPP2R2A and ARPP19; this inhibition is enhanced when ARPP19 is phosphorylated. Inhibited by the interaction between PPP2R2A and PABIR1/FAM122A. Functionally, catalytic subunit of protein phosphatase 2A (PP2A), a serine/threonine phosphatase involved in the regulation of a wide variety of enzymes, signal transduction pathways, and cellular events. PP2A is the major phosphatase for microtubule-associated proteins (MAPs). PP2A can modulate the activity of phosphorylase B kinase casein kinase 2, mitogen-stimulated S6 kinase, and MAP-2 kinase. Cooperates with SGO2 to protect centromeric cohesin from separase-mediated cleavage in oocytes specifically during meiosis I. Can dephosphorylate various proteins, such as SV40 large T antigen, AXIN1, p53/TP53, PIM3, WEE1. Activates RAF1 by dephosphorylating it at 'Ser-259'. Mediates dephosphorylation of WEE1, preventing its ubiquitin-mediated proteolysis, increasing WEE1 protein levels, and promoting the G2/M checkpoint. Mediates dephosphorylation of MYC; promoting its ubiquitin-mediated proteolysis: interaction with AMBRA1 enhances interaction between PPP2CA and MYC. Mediates dephosphorylation of FOXO3; promoting its stabilization: interaction with AMBRA1 enhances interaction between PPP2CA and FOXO3. Catalyzes dephosphorylation of the pyrin domain of NLRP3, promoting assembly of the NLRP3 inflammasome. Together with RACK1 adapter, mediates dephosphorylation of AKT1 at 'Ser-473', preventing AKT1 activation and AKT-mTOR signaling pathway. Dephosphorylation of AKT1 is essential for regulatory T-cells (Treg) homeostasis and stability. Catalyzes dephosphorylation of PIM3, promotinh PIM3 ubiquitination and proteasomal degradation. Part of the striatin-interacting phosphatase and kinase (STRIPAK) complexes. STRIPAK complexes have critical roles in protein (de)phosphorylation and are regulators of multiple signaling pathways including Hippo, MAPK, nuclear receptor and cytoskeleton remodeling. Different types of STRIPAK complexes are involved in a variety of biological processes such as cell growth, differentiation, apoptosis, metabolism and immune regulation. Key mediator of a quality checkpoint during transcription elongation as part of the Integrator-PP2A (INTAC) complex. The INTAC complex drives premature transcription termination of transcripts that are unfavorably configured for transcriptional elongation: within the INTAC complex, PPP2CA catalyzes dephosphorylation of the C-terminal domain (CTD) of Pol II subunit POLR2A/RPB1 and SUPT5H/SPT5, thereby preventing transcriptional elongation. This chain is Serine/threonine-protein phosphatase 2A catalytic subunit alpha isoform (PPP2CA), found in Homo sapiens (Human).